Consider the following 562-residue polypeptide: Vacuolar basic amino acid transporter 1 (562 aa).

Topologically, residues 1–30 (MQTLDETSNLLPPPEEAEAPPLEQKFHEYN) are vacuolar. The helical transmembrane segment at 31–51 (LALPKFPILFSLWLGSFLSSL) threads the bilayer. Residues 52–100 (DSTIVANIMNRVAEEFSESSKKQWIATSFLLTNTAFQPLYGKLSDITGR) are Cytoplasmic-facing. The chain crosses the membrane as a helical span at residues 101–121 (KSALLTAQFFFGLGCLLTCFA). At 122–131 (RNVTEFSIAR) the chain is on the vacuolar side. N123 carries N-linked (GlcNAc...) asparagine glycosylation. A helical transmembrane segment spans residues 132-152 (AICGIGAGGLNAISSIAVSDI). Over 153 to 166 (CTARERGVYQGYAN) the chain is Cytoplasmic. A helical membrane pass occupies residues 167–187 (IVFGFGQLLGAPLGGVFIETI). Over 188-190 (GWR) the chain is Vacuolar. The helical transmembrane segment at 191 to 211 (ALFGIQVPVIMLCSVLAIKNI) threads the bilayer. Residues 212–232 (NIKLFHVPPMKERYTLKNLSR) are Cytoplasmic-facing. A helical membrane pass occupies residues 233 to 253 (IDIFGSLSLVATISGVLFLCS). Residues 254-255 (SQ) lie on the Vacuolar side of the membrane. Residues 256 to 276 (LNKLYLALFTIGSFIVFILVE) traverse the membrane as a helical segment. Residues 277 to 292 (RYYATEKILPFELLTR) are Cytoplasmic-facing. A helical transmembrane segment spans residues 293–313 (SFCLSSAVTVISSFVVFGEIF). Topologically, residues 314–331 (RSPIYLQLLQNISVTKTG) are vacuolar. An N-linked (GlcNAc...) asparagine glycan is attached at N324. Residues 332–352 (LFLIFPSISVAVGSLVTGWVL) form a helical membrane-spanning segment. Topologically, residues 353–365 (RNTKINLAHCAYQ) are cytoplasmic. The helical transmembrane segment at 366-386 (IIFGGMIMQLLGLGLGYFLLS) threads the bilayer. The Vacuolar segment spans residues 387-419 (HLNPDYTIYDMLESITFRSNSIWWKLIYVFASV). Residues 420–440 (LVSFGYACLLVATLVSIVFTV) form a helical membrane-spanning segment. The Cytoplasmic portion of the chain corresponds to 441–448 (EKSQQGTM). A helical transmembrane segment spans residues 449–469 (TGVFYLWRSIGNVLGASLTLV). Topologically, residues 470-528 (SYENSLSSMLWNYMFKTKRDDEYHFTKKQYYSLINDSSYLRGPNFPTDIFVRILDVYKK) are vacuolar. An N-linked (GlcNAc...) asparagine glycan is attached at N504. A helical transmembrane segment spans residues 529–549 (AFLISYIPNIALAAVGIVLSL). Topologically, residues 550–562 (YLVKHTYKRSSSS) are cytoplasmic.

This sequence belongs to the major facilitator superfamily.

It localises to the vacuole membrane. Transporter required for vacuolar uptake of at least histidine and lysine. The polypeptide is Vacuolar basic amino acid transporter 1 (VBA1) (Saccharomyces cerevisiae (strain ATCC 204508 / S288c) (Baker's yeast)).